We begin with the raw amino-acid sequence, 198 residues long: 3-isopropylmalate dehydratase small subunit (198 aa).

It belongs to the LeuD family. LeuD type 1 subfamily. In terms of assembly, heterodimer of LeuC and LeuD.

The enzyme catalyses (2R,3S)-3-isopropylmalate = (2S)-2-isopropylmalate. The protein operates within amino-acid biosynthesis; L-leucine biosynthesis; L-leucine from 3-methyl-2-oxobutanoate: step 2/4. Its function is as follows. Catalyzes the isomerization between 2-isopropylmalate and 3-isopropylmalate, via the formation of 2-isopropylmaleate. The protein is 3-isopropylmalate dehydratase small subunit of Mycobacterium marinum (strain ATCC BAA-535 / M).